We begin with the raw amino-acid sequence, 264 residues long: Glutamate racemase 2 (264 aa).

Residues 10 to 11 (DS) and 42 to 43 (YG) each bind substrate. C73 acts as the Proton donor/acceptor in catalysis. 74 to 75 (NT) is a binding site for substrate. The Proton donor/acceptor role is filled by C181. Residue 182-183 (TH) coordinates substrate.

Belongs to the aspartate/glutamate racemases family.

The catalysed reaction is L-glutamate = D-glutamate. The protein operates within cell wall biogenesis; peptidoglycan biosynthesis. Functionally, provides the (R)-glutamate required for cell wall biosynthesis. The polypeptide is Glutamate racemase 2 (Caldanaerobacter subterraneus subsp. tengcongensis (strain DSM 15242 / JCM 11007 / NBRC 100824 / MB4) (Thermoanaerobacter tengcongensis)).